The chain runs to 365 residues: UDP-N-acetylglucosamine--N-acetylmuramyl-(pentapeptide) pyrophosphoryl-undecaprenol N-acetylglucosamine transferase (365 aa).

Residues 13-15 (TGG), N125, R165, S192, and Q293 contribute to the UDP-N-acetyl-alpha-D-glucosamine site.

This sequence belongs to the glycosyltransferase 28 family. MurG subfamily.

It is found in the cell inner membrane. The enzyme catalyses di-trans,octa-cis-undecaprenyl diphospho-N-acetyl-alpha-D-muramoyl-L-alanyl-D-glutamyl-meso-2,6-diaminopimeloyl-D-alanyl-D-alanine + UDP-N-acetyl-alpha-D-glucosamine = di-trans,octa-cis-undecaprenyl diphospho-[N-acetyl-alpha-D-glucosaminyl-(1-&gt;4)]-N-acetyl-alpha-D-muramoyl-L-alanyl-D-glutamyl-meso-2,6-diaminopimeloyl-D-alanyl-D-alanine + UDP + H(+). Its pathway is cell wall biogenesis; peptidoglycan biosynthesis. Cell wall formation. Catalyzes the transfer of a GlcNAc subunit on undecaprenyl-pyrophosphoryl-MurNAc-pentapeptide (lipid intermediate I) to form undecaprenyl-pyrophosphoryl-MurNAc-(pentapeptide)GlcNAc (lipid intermediate II). This is UDP-N-acetylglucosamine--N-acetylmuramyl-(pentapeptide) pyrophosphoryl-undecaprenol N-acetylglucosamine transferase from Ruegeria sp. (strain TM1040) (Silicibacter sp.).